The following is a 289-amino-acid chain: MPVVRKIFRRRRGDSESEEDEQDSEEVRLKLEETREVQNLRKRPNGVSAVALLVGEKVQEETTLVDDPFQMKTGGMVDMKKLKERGKDKISEEEDLHLGTSFSAETNRRDEDADMMKYIETELKKRKGIVEHEEQKVKPKNAEDCLYELPENIRVSSAKKTEEMLSNQMLSGIPEVDLGIDAKIKNIISTEDAKARLLAEQQNKKKDSETSFVPTNMAVNYVQHNRFYHEELNAPIRRNKEEPKARPLRVGDTEKPEPERSPPNRKRPANEKATDDYHYEKFKKMNRRY.

Residues M1–R12 are compositionally biased toward basic residues. Positions M1–V27 are disordered. The interval R5–V58 is interaction with SNRNP200. Residues S15 and S17 each carry the phosphoserine modification. Position 147 is a phosphotyrosine (Y147). A compositionally biased stretch (basic and acidic residues) spans L232–K283. Residues L232–Y289 form a disordered region. Residue T253 is modified to Phosphothreonine. Residue S261 is modified to Phosphoserine.

This sequence belongs to the TLS1 family. Component of the spliceosome. Interacts with SNRNP200; the interaction is direct. Interacts with PRPF8.

It localises to the nucleus. It is found in the chromosome. The protein localises to the centromere. In terms of biological role, plays a role in pre-mRNA splicing by promoting usage of the upstream 3'-splice site at alternative NAGNAG splice sites; these are sites featuring alternative acceptor motifs separated by only a few nucleotides. May also modulate exon inclusion events. Plays a role in spliceosomal remodeling by displacing WBP4 from SNRNP200 and may act to inhibit SNRNP200 helicase activity. Binds U5 snRNA. Required for proper chromosome segregation. Not required for splicing of shelterin components. This chain is Splicing factor C9orf78 (C9orf78), found in Homo sapiens (Human).